Reading from the N-terminus, the 216-residue chain is MRLGIYGGTFDPIHIGHLRMAVEVQEKFSLDKVVLIPCNTPPHKENGAAASARDRLAMVRMAVEGRAGLEASDMEISQGGPSYTVATLEALQSPDKELFFILGLDAFLEIHTWKEYERLFSLAHFIVLARPWQGDRAEMFHVEQYIRENLPGLAVPEPDQGYFRALHENKRIYFAQTTALDISATHIRKTVNQGKSIAFLAPESVEKYIKRQGLYL.

This sequence belongs to the NadD family.

It carries out the reaction nicotinate beta-D-ribonucleotide + ATP + H(+) = deamido-NAD(+) + diphosphate. It participates in cofactor biosynthesis; NAD(+) biosynthesis; deamido-NAD(+) from nicotinate D-ribonucleotide: step 1/1. Functionally, catalyzes the reversible adenylation of nicotinate mononucleotide (NaMN) to nicotinic acid adenine dinucleotide (NaAD). The chain is Probable nicotinate-nucleotide adenylyltransferase from Desulfatibacillum aliphaticivorans.